A 227-amino-acid polypeptide reads, in one-letter code: uncharacterized protein (227 aa).

7 consecutive transmembrane segments (helical) span residues 25 to 45 (LLGFSFIPASAGAALAANAGF), 49 to 69 (AAFGSRWIGFAVVLAFFYGMI), 80 to 100 (TGVTLLMVFTFGMGVLIGPVL), 111 to 131 (KIVGIAAAMTAAVFLTMSALA), 144 to 164 (FLTVGAVILMVAVVANLFLGI), 165 to 185 (PALALTISAGFVLFSSLMIMW), and 201 to 221 (AALTLFISLYNIFSSLLNILL).

It is found in the cell membrane. This is an uncharacterized protein from Neisseria meningitidis serogroup B (strain ATCC BAA-335 / MC58).